The following is a 188-amino-acid chain: mRNA transport factor GFD1 (188 aa).

Residues Met1–Ser128 are disordered. Positions Lys18 to Asn28 are enriched in basic residues. Low complexity predominate over residues Asn29–Asn44. Residues Gly59–Pro79 show a composition bias toward basic and acidic residues. 3 positions are modified to phosphoserine: Ser87, Ser106, and Ser111. The segment covering Pro112–Ser128 has biased composition (low complexity). Residues Lys119–Glu164 are a coiled coil.

In terms of assembly, interacts with GLE1, NUP42, NAB2, ZDS1 and probably DBP5. Forms a complex with GLE1 and NAB2.

It localises to the cytoplasm. Its subcellular location is the nucleus. The protein localises to the nuclear pore complex. The protein resides in the nucleus membrane. In terms of biological role, high-copy suppressor of mutant alleles of ATP-dependent RNA helicase DBP5, which is involved in mRNA export from the nucleus. It may also play an important role in a late stage of NAB2-mRNA export. This Saccharomyces cerevisiae (strain ATCC 204508 / S288c) (Baker's yeast) protein is mRNA transport factor GFD1 (GFD1).